The primary structure comprises 179 residues: DELTA-actitoxin-Afr1a (179 aa).

An N-terminal alpha-helix that contributes to the pore region spans residues 1–29; sequence SADVAGAVIDGAGLGFDVLKTVLEALGNV. Arg-31 serves as a coordination point for an N-(acyl)-sphingosylphosphocholine. The N-acetyl-D-glucosamine 6-sulfate site is built by Tyr-51 and Arg-53. The an N-(acyl)-sphingosylphosphocholine site is built by Arg-53, Ser-54, Arg-79, Gly-85, Tyr-108, Tyr-113, Ser-114, Trp-116, Tyr-133, Tyr-137, Tyr-138, Arg-144, and Gly-168. The interval 105 to 120 is trp-rich region, which is important for the binding to lipid membrane; the sequence is SVPYDYNWYSNWWNVR. Tyr-138 is a binding site for N-acetyl-D-glucosamine 6-sulfate. A Cell attachment site, crucial for protein stability motif is present at residues 144–146; sequence RGD.

The protein belongs to the actinoporin family. Sea anemone subfamily. As to quaternary structure, octamer or nonamer in membranes. Monomer in the soluble state.

The protein resides in the secreted. It is found in the nematocyst. The protein localises to the target cell membrane. Pore-forming toxin (PFT) that consists of a crown-shaped octamer or nonamer that forms cation-selective hydrophilic pores of about 1.5 nm (inside) and 13 nm (outside). It causes cardiac stimulation and cytolysis (EC(50)=1.6 nM on erythrocytes). Interestingly, the Phe-16 is crucial for hemolysis. Pore formation is a multi-step process that involves specific recognition of membrane sphingomyelin (but neither cholesterol nor phosphatidylcholine) using aromatic rich region and adjacent phosphocholine (POC) binding site, firm binding to the membrane (mainly driven by hydrophobic interactions) accompanied by the transfer of the N-terminal region to the lipid-water interface and finally pore formation after oligomerization of monomers. It is probable that a dimeric form is an assembly intermediate before the complete oligomerization. The formation of stable pores occurs only in vesicles composed of DOPC/SM (there is no oligomerization when the PFT is treated with vesicles of DOPC or SM alone). The transmembrane pore displays 8 lateral perforations, one at each subunit-subunit interface, partially occupied by the acyl-chain region of a bridging lipid. Each pore contains 24 lipid molecules, firmly bound to each subunit, that is, 3 lipids (L1, L2, L3, L4 and/or L5) are associated to each subunit. Lipid L1 bridges 2 subunits, whereas lipids L2 and L3 bind to sites at single subunit. This Actinia fragacea (Strawberry anemone) protein is DELTA-actitoxin-Afr1a.